A 407-amino-acid chain; its full sequence is Putative glucose/galactose transporter (407 aa).

Transmembrane regions (helical) follow at residues 11–31 (GSLTALFFLMGFITVLNDILI), 47–67 (LIQFCFFGAYFIMGGVFGNVI), 70–90 (IGYPFGVVLGFVITATGCALF), 96–116 (FGSYGFFLGALFILASGIVCL), 139–159 (VQAFNSLGTTLGPIFGSLLIF), 180–200 (VQMPYLGLAVFSLLLALIMYL), 225–245 (FVFGALGIFFYVGGEVAIGSF), 263–283 (HYLVYYWGGAMVGRFLGSVLM), 300–320 (IVLIALAIIIGGKIALFALTF), 321–341 (VGFFNSIMFPTIFSLATLNLG), 349–369 (GVISMAIVGGALIPPIQGAVT), and 378–398 (NLLYAYGVPLLCYFYILFFAL).

It belongs to the major facilitator superfamily. FHS transporter (TC 2.A.1.7) family.

Its subcellular location is the cell inner membrane. Its function is as follows. Intake of glucose and galactose. The sequence is that of Putative glucose/galactose transporter (gluP) from Helicobacter pylori (strain ATCC 700392 / 26695) (Campylobacter pylori).